The sequence spans 98 residues: MSLVHINIFLAFTVSLVGLLMYRSHLMSSLLCLEGMMLSLFVMATMMVLNTHFTLASMMPIILLVFAACERALGLSLLVMVSNTYGVDHVQNLNLLQC.

Helical transmembrane passes span 1–21 (MSLVHINIFLAFTVSLVGLLM), 25–45 (HLMSSLLCLEGMMLSLFVMAT), and 59–81 (MPIILLVFAACERALGLSLLVMV).

This sequence belongs to the complex I subunit 4L family. Core subunit of respiratory chain NADH dehydrogenase (Complex I) which is composed of 45 different subunits.

It is found in the mitochondrion inner membrane. The enzyme catalyses a ubiquinone + NADH + 5 H(+)(in) = a ubiquinol + NAD(+) + 4 H(+)(out). Its function is as follows. Core subunit of the mitochondrial membrane respiratory chain NADH dehydrogenase (Complex I) which catalyzes electron transfer from NADH through the respiratory chain, using ubiquinone as an electron acceptor. Part of the enzyme membrane arm which is embedded in the lipid bilayer and involved in proton translocation. The chain is NADH-ubiquinone oxidoreductase chain 4L (MT-ND4L) from Equus caballus (Horse).